Consider the following 471-residue polypeptide: Adenosylhomocysteinase (471 aa).

Thr-58, Asp-133, and Glu-195 together coordinate substrate. Residue 196-198 (TTT) participates in NAD(+) binding. Positions 225 and 229 each coordinate substrate. Residues Asn-230, 259 to 264 (GFGDVG), Glu-282, Asn-317, 338 to 340 (IGH), and Asn-383 each bind NAD(+).

The protein belongs to the adenosylhomocysteinase family. Requires NAD(+) as cofactor.

Its subcellular location is the cytoplasm. It carries out the reaction S-adenosyl-L-homocysteine + H2O = L-homocysteine + adenosine. It functions in the pathway amino-acid biosynthesis; L-homocysteine biosynthesis; L-homocysteine from S-adenosyl-L-homocysteine: step 1/1. In terms of biological role, may play a key role in the regulation of the intracellular concentration of adenosylhomocysteine. The protein is Adenosylhomocysteinase of Rhodopseudomonas palustris (strain BisB5).